Reading from the N-terminus, the 134-residue chain is Cytochrome b (134 aa).

3 helical membrane-spanning segments follow: residues 33–53, 77–98, and 113–133; these read FGSLLGVCLIIQILTGLFLAM, WLIRYLHANGASMFFICLFLHV, and WNIGVLLLFAVMATAFMGYVL. Positions 83 and 97 each coordinate heme b.

It belongs to the cytochrome b family. As to quaternary structure, the cytochrome bc1 complex contains 11 subunits: 3 respiratory subunits (MT-CYB, CYC1 and UQCRFS1), 2 core proteins (UQCRC1 and UQCRC2) and 6 low-molecular weight proteins (UQCRH/QCR6, UQCRB/QCR7, UQCRQ/QCR8, UQCR10/QCR9, UQCR11/QCR10 and a cleavage product of UQCRFS1). This cytochrome bc1 complex then forms a dimer. Heme b is required as a cofactor.

Its subcellular location is the mitochondrion inner membrane. Its function is as follows. Component of the ubiquinol-cytochrome c reductase complex (complex III or cytochrome b-c1 complex) that is part of the mitochondrial respiratory chain. The b-c1 complex mediates electron transfer from ubiquinol to cytochrome c. Contributes to the generation of a proton gradient across the mitochondrial membrane that is then used for ATP synthesis. The polypeptide is Cytochrome b (MT-CYB) (Sorex shinto sadonis (Sado shrew)).